We begin with the raw amino-acid sequence, 330 residues long: Tryptophan--tRNA ligase (330 aa).

Residues 9–11 and 17–18 contribute to the ATP site; these read QPT and GN. A 'HIGH' region motif is present at residues 10 to 18; it reads PTGDPHIGN. Residue D136 coordinates L-tryptophan. ATP is bound by residues 148 to 150, I187, and 195 to 199; these read GED and KMSKS. The 'KMSKS' region signature appears at 195-199; that stretch reads KMSKS.

Belongs to the class-I aminoacyl-tRNA synthetase family. Homodimer.

The protein resides in the cytoplasm. It catalyses the reaction tRNA(Trp) + L-tryptophan + ATP = L-tryptophyl-tRNA(Trp) + AMP + diphosphate + H(+). Functionally, catalyzes the attachment of tryptophan to tRNA(Trp). The sequence is that of Tryptophan--tRNA ligase from Deinococcus radiodurans (strain ATCC 13939 / DSM 20539 / JCM 16871 / CCUG 27074 / LMG 4051 / NBRC 15346 / NCIMB 9279 / VKM B-1422 / R1).